The chain runs to 917 residues: Envelope glycoprotein B (917 aa).

An N-terminal signal peptide occupies residues M1–A22. The segment covering T21–R30 has biased composition (low complexity). The tract at residues T21 to P117 is disordered. The Virion surface portion of the chain corresponds to A23 to P792. The span at E38–N49 shows a compositional bias: basic and acidic residues. N48, N110, and N164 each carry an N-linked (GlcNAc...) asparagine; by host glycan. Disulfide bonds link C139-C591, C156-C547, C230-C294, C387-C435, and C614-C651. Involved in fusion and/or binding to host membrane stretches follow at residues V196–Y202 and G281–H288. 3 N-linked (GlcNAc...) asparagine; by host glycosylation sites follow: N421, N453, and N505. N-linked (GlcNAc...) asparagine; by host glycosylation is present at N692. The segment at I737 to S790 is hydrophobic membrane proximal region. Residues F793–F813 traverse the membrane as a helical segment. The Intravirion segment spans residues R814–I917. The Golgi targeting signature appears at Y865–L868. The Internalization motif motif lies at Y907–L910.

This sequence belongs to the herpesviridae glycoprotein B family. In terms of assembly, homotrimer; disulfide-linked. Binds to heparan sulfate proteoglycans. Interacts with gH/gL heterodimer. Post-translationally, a proteolytic cleavage by host furin generates two subunits that remain linked by disulfide bonds.

Its subcellular location is the virion membrane. It localises to the host cell membrane. It is found in the host endosome membrane. The protein localises to the host Golgi apparatus membrane. Its function is as follows. Envelope glycoprotein that forms spikes at the surface of virion envelope. Essential for the initial attachment to heparan sulfate moieties of the host cell surface proteoglycans. Involved in fusion of viral and cellular membranes leading to virus entry into the host cell. Following initial binding to its host receptors, membrane fusion is mediated by the fusion machinery composed at least of gB and the heterodimer gH/gL. May be involved in the fusion between the virion envelope and the outer nuclear membrane during virion egress. The sequence is that of Envelope glycoprotein B from Bovine herpesvirus 2 (strain BMV) (BoHV-2).